The chain runs to 284 residues: MTSNRSTAWPAPAKLNLFLHVNGRRADGYHELQTLFQFIDYCDYLDFAVNDSGSLTLHSEMEAVVANSDNLILKAAKSLQEYTGTHQGAEIWLDKKLPMGGGIGGGSSDAATTLVALNHLWQTQLSQDELAKIGLSLGADVPVFINGLAAFAEGVGEKLIPVEAPENWYLILTPDVHVSTAEVFNDPLLPRDTPKLSMDDLMSSDWHNDCQPRVAERYPQVAKALAWLIEYAPSRMTGTGACVFGIFDTRQQAEHVFAKLPAGLCGFIAKGTNKSPLALRLTQH.

Residue Lys14 is part of the active site. 98–108 serves as a coordination point for ATP; that stretch reads PMGGGIGGGSS. Residue Asp140 is part of the active site.

This sequence belongs to the GHMP kinase family. IspE subfamily.

It catalyses the reaction 4-CDP-2-C-methyl-D-erythritol + ATP = 4-CDP-2-C-methyl-D-erythritol 2-phosphate + ADP + H(+). It functions in the pathway isoprenoid biosynthesis; isopentenyl diphosphate biosynthesis via DXP pathway; isopentenyl diphosphate from 1-deoxy-D-xylulose 5-phosphate: step 3/6. In terms of biological role, catalyzes the phosphorylation of the position 2 hydroxy group of 4-diphosphocytidyl-2C-methyl-D-erythritol. This chain is 4-diphosphocytidyl-2-C-methyl-D-erythritol kinase, found in Shewanella loihica (strain ATCC BAA-1088 / PV-4).